We begin with the raw amino-acid sequence, 227 residues long: 7-cyano-7-deazaguanine synthase (227 aa).

8-18 (LSGGTDSATVL) lines the ATP pocket. 4 residues coordinate Zn(2+): cysteine 192, cysteine 202, cysteine 205, and cysteine 208.

Belongs to the QueC family. Zn(2+) serves as cofactor.

The enzyme catalyses 7-carboxy-7-deazaguanine + NH4(+) + ATP = 7-cyano-7-deazaguanine + ADP + phosphate + H2O + H(+). It functions in the pathway purine metabolism; 7-cyano-7-deazaguanine biosynthesis. In terms of biological role, catalyzes the ATP-dependent conversion of 7-carboxy-7-deazaguanine (CDG) to 7-cyano-7-deazaguanine (preQ(0)). This is 7-cyano-7-deazaguanine synthase from Rickettsia prowazekii (strain Madrid E).